Reading from the N-terminus, the 261-residue chain is Protein unc-50 homolog (261 aa).

The next 6 membrane-spanning stretches (helical) occupy residues 37 to 57 (IFHYPQMDIEYTFWIMFYLCF), 82 to 102 (AFAVILVFFMAIASMSYAITF), 113 to 133 (VMFWAVFVDFITVGLLIATIG), 166 to 186 (SFFPLFIILYVVQFFLLPILL), 190 to 210 (LFAAILSNTLYIIGFSYYYYV), and 225 to 245 (VVFLYPIGILFALYIVSVVMG).

Belongs to the unc-50 family.

Its subcellular location is the membrane. This chain is Protein unc-50 homolog, found in Dictyostelium discoideum (Social amoeba).